Reading from the N-terminus, the 209-residue chain is MAKNYYDITLALAGICQSARLVQQLAHQGHCDADALHVSLNSVIDLNPGSTLGVFGGSETNLRLGLETLLGVLNASNRQGLNAELTRYTLSLMVLERKLNSAKGAMDTLGDRIAGLQRQLDHFDLQSETLMSAMAAIYVDVISPLGPRIQVTGSPAVLQSSQVQAKVRASLLAGIRAAVLWHQVGGGRLQLMFSRNRLTAQAKQILAHC.

Residues 79 to 121 (QGLNAELTRYTLSLMVLERKLNSAKGAMDTLGDRIAGLQRQLD) adopt a coiled-coil conformation.

Belongs to the HflD family.

It is found in the cytoplasm. The protein resides in the cell inner membrane. The protein is High frequency lysogenization protein HflD homolog of Enterobacter sp. (strain 638).